The chain runs to 83 residues: Small ribosomal subunit protein uS17 (83 aa).

It belongs to the universal ribosomal protein uS17 family. Part of the 30S ribosomal subunit.

Functionally, one of the primary rRNA binding proteins, it binds specifically to the 5'-end of 16S ribosomal RNA. The protein is Small ribosomal subunit protein uS17 of Magnetococcus marinus (strain ATCC BAA-1437 / JCM 17883 / MC-1).